A 324-amino-acid polypeptide reads, in one-letter code: Putative S-adenosyl-L-methionine-dependent methyltransferase MUL_0818 (324 aa).

S-adenosyl-L-methionine is bound by residues aspartate 138 and 167 to 168 (DL).

The protein belongs to the UPF0677 family.

Exhibits S-adenosyl-L-methionine-dependent methyltransferase activity. In Mycobacterium ulcerans (strain Agy99), this protein is Putative S-adenosyl-L-methionine-dependent methyltransferase MUL_0818.